The primary structure comprises 549 residues: Probable protein kinase UbiB (549 aa).

The 379-residue stretch at 123–501 folds into the Protein kinase domain; it reads DFDDVPLASA…QHKAHKSNYL (379 aa). Residues 129–137 and Lys152 each bind ATP; that span reads LASASIAQV. Residue Asp287 is the Proton acceptor of the active site. A run of 2 helical transmembrane segments spans residues 498 to 517 and 521 to 540; these read SNYLLITSAVFVICGTILFT and TLWASLLCLGTGAGLWLLGW.

The protein belongs to the ABC1 family. UbiB subfamily.

The protein localises to the cell inner membrane. It participates in cofactor biosynthesis; ubiquinone biosynthesis [regulation]. Its function is as follows. Is probably a protein kinase regulator of UbiI activity which is involved in aerobic coenzyme Q (ubiquinone) biosynthesis. In Shewanella denitrificans (strain OS217 / ATCC BAA-1090 / DSM 15013), this protein is Probable protein kinase UbiB.